The following is a 401-amino-acid chain: Mu-type opioid receptor (401 aa).

At 1 to 69 the chain is on the extracellular side; it reads MDSGAVPTNA…CPSAGSPSMI (69 aa). 5 N-linked (GlcNAc...) asparagine glycosylation sites follow: asparagine 9, asparagine 12, asparagine 34, asparagine 41, and asparagine 49. The helical transmembrane segment at 70–94 threads the bilayer; it reads TAIIIMALYSIVCVVGLFGNFLVMY. Over 95–107 the chain is Cytoplasmic; sequence VIVRYTKMKTATN. A helical membrane pass occupies residues 108–132; sequence IYIFNLALADALATSTLPFQSVNYL. Topologically, residues 133-143 are extracellular; the sequence is MGTWPFGTILC. Cysteines 143 and 220 form a disulfide. A helical transmembrane segment spans residues 144 to 166; the sequence is KIVISIDYYNMFTSIFTLCTMSV. The Cytoplasmic segment spans residues 167–186; the sequence is DRYIAVCHPVKALDLRTPRN. Tyrosine 169 bears the Phosphotyrosine mark. The helical transmembrane segment at 187-208 threads the bilayer; the sequence is AKIINICNWILSSAIGLPVMFM. The Extracellular segment spans residues 209–231; the sequence is ATTKYRQGSIDCTLTFSHPTWYW. A helical membrane pass occupies residues 232 to 256; that stretch reads ENLLKICVFIFAFIMPILIITVCYG. Residues 257–280 are Cytoplasmic-facing; the sequence is LMILRLKSVRMLSGSKEKDRNLRR. Residues 281-307 traverse the membrane as a helical segment; the sequence is ITRMVLVVVAVFIVCWTPIHIYVIIKA. The Extracellular portion of the chain corresponds to 308 to 315; the sequence is LITIPETT. A helical transmembrane segment spans residues 316 to 339; the sequence is FQTVSWHFCIALGYTNSCLNPVLY. An NPxxY; plays a role in stabilizing the activated conformation of the receptor motif is present at residues 335 to 339; it reads NPVLY. The Cytoplasmic segment spans residues 340–401; it reads AFLDENFKRC…NLEAETTPLP (62 aa). Residue cysteine 354 is the site of S-palmitoyl cysteine attachment. Residues 365 to 389 are disordered; that stretch reads NSTRIRQNTRDHPSTANTVDRTNHQ. Phosphoserine is present on serine 366. Residue threonine 373 is modified to Phosphothreonine. Serine 378 bears the Phosphoserine mark. Position 397 is a phosphothreonine (threonine 397).

This sequence belongs to the G-protein coupled receptor 1 family. Forms homooligomers and heterooligomers with other GPCRs, such as OPRD1, OPRK1, OPRL1, NPFFR2, ADRA2A, SSTR2, CNR1 and CCR5 (probably in dimeric forms). Interacts with heterotrimeric G proteins; interaction with a heterotrimeric complex containing GNAI1, GNB1 and GNG2 stabilizes the active conformation of the receptor and increases its affinity for endomorphin-2, the synthetic opioid peptide DAMGO and for morphinan agonists. Interacts with PPL; the interaction disrupts agonist-mediated G-protein activation. Interacts (via C-terminus) with DNAJB4 (via C-terminus). Interacts with calmodulin; the interaction inhibits the constitutive activity of OPRM1; it abolishes basal and attenuates agonist-stimulated G-protein coupling. Interacts with FLNA, PLD2, RANBP9 and WLS and GPM6A. Interacts with RTP4. Interacts with SYP and GNAS. Interacts with RGS9, RGS17, RGS20, RGS4, PPP1R9B and HINT1. In terms of processing, phosphorylated. Differentially phosphorylated in basal and agonist-induced conditions. Agonist-mediated phosphorylation modulates receptor internalization. Phosphorylated by GRK2 in a agonist-dependent manner. Phosphorylation at Tyr-169 requires receptor activation, is dependent on non-receptor protein tyrosine kinase Src and results in a decrease in agonist efficacy by reducing G-protein coupling efficiency. Phosphorylated on tyrosine residues; the phosphorylation is involved in agonist-induced G-protein-independent receptor down-regulation. Phosphorylation at Ser-378 is involved in G-protein-dependent but not beta-arrestin-dependent activation of the ERK pathway. Post-translationally, ubiquitinated. A basal ubiquitination seems not to be related to degradation. Ubiquitination is increased upon formation of OPRM1:OPRD1 oligomers leading to proteasomal degradation; the ubiquitination is diminished by RTP4.

The protein localises to the cell membrane. It localises to the cell projection. The protein resides in the axon. It is found in the perikaryon. Its subcellular location is the dendrite. The protein localises to the endosome. In terms of biological role, receptor for endogenous opioids such as beta-endorphin and endomorphin. Receptor for natural and synthetic opioids including morphine, heroin, DAMGO, fentanyl, etorphine, buprenorphin and methadone. Also activated by enkephalin peptides, such as Met-enkephalin or Met-enkephalin-Arg-Phe, with higher affinity for Met-enkephalin-Arg-Phe. Agonist binding to the receptor induces coupling to an inactive GDP-bound heterotrimeric G-protein complex and subsequent exchange of GDP for GTP in the G-protein alpha subunit leading to dissociation of the G-protein complex with the free GTP-bound G-protein alpha and the G-protein beta-gamma dimer activating downstream cellular effectors. The agonist- and cell type-specific activity is predominantly coupled to pertussis toxin-sensitive G(i) and G(o) G alpha proteins, GNAI1, GNAI2, GNAI3 and GNAO1, and to a lesser extent to pertussis toxin-insensitive G alpha proteins GNAZ and GNA15. They mediate an array of downstream cellular responses, including inhibition of adenylate cyclase activity and both N-type and L-type calcium channels, activation of inward rectifying potassium channels, mitogen-activated protein kinase (MAPK), phospholipase C (PLC), phosphoinositide/protein kinase (PKC), phosphoinositide 3-kinase (PI3K) and regulation of NF-kappa-B. Also couples to adenylate cyclase stimulatory G alpha proteins. The selective temporal coupling to G-proteins and subsequent signaling can be regulated by RGSZ proteins, such as RGS9, RGS17 and RGS4. Phosphorylation by members of the GPRK subfamily of Ser/Thr protein kinases and association with beta-arrestins is involved in short-term receptor desensitization. Beta-arrestins associate with the GPRK-phosphorylated receptor and uncouple it from the G-protein thus terminating signal transduction. The phosphorylated receptor is internalized through endocytosis via clathrin-coated pits which involves beta-arrestins. The activation of the ERK pathway occurs either in a G-protein-dependent or a beta-arrestin-dependent manner and is regulated by agonist-specific receptor phosphorylation. Acts as a class A G-protein coupled receptor (GPCR) which dissociates from beta-arrestin at or near the plasma membrane and undergoes rapid recycling. Receptor down-regulation pathways are varying with the agonist and occur dependent or independent of G-protein coupling. Endogenous ligands induce rapid desensitization, endocytosis and recycling. Heterooligomerization with other GPCRs can modulate agonist binding, signaling and trafficking properties. Involved in neurogenesis. This is Mu-type opioid receptor (OPRM1) from Bos taurus (Bovine).